The sequence spans 376 residues: MEDPNRMMAHTGGMMAPQGYSLSGQDDGQNTGNENEVRKQKDIGEILQQIMSISEQSLDEAQARKHTLNCHRMKPALFSVLCEIKEKTVLSIRNTQEEEPPDPQLMRLDNMLIAEGVAGPEKGGGGAAAASAAAASQGGSLSIDGADNAIEHSDYRAKLAQIRQIYHQELEKYEQACNEFTTHVMNLLREQSRTRPITPKEIERMVQIIHKKFSSIQMQLKQSTCEAVMILRSRFLDARRKRRNFSKQASEILNEYFYSHLSNPYPSEEAKEELARKCGITVSQVSNWFGNKRIRYKKNIGKAQEEANLYAAKKAAGASPYSMAGPPSGTTTPMMSPAPPQDSMGYTMGSGGYDQQQPYDNSMGGYDPNLHQDLSP.

Residues 16–35 (APQGYSLSGQDDGQNTGNEN) form a disordered region. The span at 20–34 (YSLSGQDDGQNTGNE) shows a compositional bias: polar residues. One can recognise a PBC domain in the interval 38-237 (RKQKDIGEIL…VMILRSRFLD (200 aa)). The segment at 45-124 (EILQQIMSIS…EGVAGPEKGG (80 aa)) is PBC-A. The segment at 127 to 237 (AAAASAAAAS…VMILRSRFLD (111 aa)) is PBC-B. A DNA-binding region (homeobox; TALE-type) is located at residues 238–300 (ARRKRRNFSK…NKRIRYKKNI (63 aa)). The segment covering 318 to 335 (ASPYSMAGPPSGTTTPMM) has biased composition (low complexity). Residues 318-376 (ASPYSMAGPPSGTTTPMMSPAPPQDSMGYTMGSGGYDQQQPYDNSMGGYDPNLHQDLSP) are disordered.

The protein belongs to the TALE/PBX homeobox family. As to quaternary structure, interacts with Ubx and hth.

It localises to the nucleus. In terms of biological role, transcription factor which acts with the selector homeodomain proteins altering the regulation of downstream target genes such as wingless (wg), teashirt (tsh) and decapentaplegic (dpp), thus affecting segmental identity. Delimits the eye field and prevent inappropriate eye development. Required for proper localization of chordotonal organs within the peripheral nervous system. This chain is Homeobox protein extradenticle, found in Drosophila pseudoobscura pseudoobscura (Fruit fly).